Here is a 223-residue protein sequence, read N- to C-terminus: Lipoprotein signal peptidase (223 aa).

The tract at residues 1–20 (MNSAKVNPSGHAPTPAPTAS) is disordered. Helical transmembrane passes span 32 to 52 (LFFGLAIAGGALDLWSKEAIF), 65 to 85 (WIIEGYFGIETAVNIGAVFGL), 91 to 111 (LVFAAISVFAAAAIIAWLFFF), and 116 to 136 (SCWLTFALGCITGGIIGNLYD). Active-site residues include Asp-156 and Asp-175. A helical membrane pass occupies residues 173 to 193 (IADSLLVTGAIMLLVQSFFFP). The disordered stretch occupies residues 196-223 (PHGEADGNELPGRRAPDEPTEGTKPAAS).

Belongs to the peptidase A8 family.

It localises to the cell inner membrane. It carries out the reaction Release of signal peptides from bacterial membrane prolipoproteins. Hydrolyzes -Xaa-Yaa-Zaa-|-(S,diacylglyceryl)Cys-, in which Xaa is hydrophobic (preferably Leu), and Yaa (Ala or Ser) and Zaa (Gly or Ala) have small, neutral side chains.. It participates in protein modification; lipoprotein biosynthesis (signal peptide cleavage). This protein specifically catalyzes the removal of signal peptides from prolipoproteins. The protein is Lipoprotein signal peptidase of Rhodopirellula baltica (strain DSM 10527 / NCIMB 13988 / SH1).